The following is a 433-amino-acid chain: Phosphomethylpyrimidine synthase (433 aa).

Substrate is bound by residues N66, M94, Y123, H162, S184–G186, D225–R228, and E264. Residue H268 participates in Zn(2+) binding. Y291 contacts substrate. H332 is a binding site for Zn(2+). 3 residues coordinate [4Fe-4S] cluster: C408, C411, and C415.

The protein belongs to the ThiC family. [4Fe-4S] cluster serves as cofactor.

The enzyme catalyses 5-amino-1-(5-phospho-beta-D-ribosyl)imidazole + S-adenosyl-L-methionine = 4-amino-2-methyl-5-(phosphooxymethyl)pyrimidine + CO + 5'-deoxyadenosine + formate + L-methionine + 3 H(+). It participates in cofactor biosynthesis; thiamine diphosphate biosynthesis. Catalyzes the synthesis of the hydroxymethylpyrimidine phosphate (HMP-P) moiety of thiamine from aminoimidazole ribotide (AIR) in a radical S-adenosyl-L-methionine (SAM)-dependent reaction. This chain is Phosphomethylpyrimidine synthase, found in Saccharolobus islandicus (strain M.14.25 / Kamchatka #1) (Sulfolobus islandicus).